A 159-amino-acid polypeptide reads, in one-letter code: Ribosomal RNA large subunit methyltransferase H (159 aa).

Residues Leu76, Gly108, and 127 to 132 (FSKMTF) each bind S-adenosyl-L-methionine.

Belongs to the RNA methyltransferase RlmH family. As to quaternary structure, homodimer.

Its subcellular location is the cytoplasm. It carries out the reaction pseudouridine(1915) in 23S rRNA + S-adenosyl-L-methionine = N(3)-methylpseudouridine(1915) in 23S rRNA + S-adenosyl-L-homocysteine + H(+). Functionally, specifically methylates the pseudouridine at position 1915 (m3Psi1915) in 23S rRNA. The protein is Ribosomal RNA large subunit methyltransferase H of Bifidobacterium adolescentis (strain ATCC 15703 / DSM 20083 / NCTC 11814 / E194a).